Here is a 208-residue protein sequence, read N- to C-terminus: Tektin bundle-interacting protein 1 (208 aa).

In terms of assembly, microtubule inner protein component of sperm flagellar doublet microtubules. In terms of tissue distribution, expressed in trachea multiciliated cells.

It localises to the cytoplasm. The protein resides in the cytoskeleton. Its subcellular location is the cilium axoneme. It is found in the flagellum axoneme. Its function is as follows. Microtubule inner protein (MIP) part of the dynein-decorated doublet microtubules (DMTs) in cilia axoneme, which is required for motile cilia beating. Located at the center of the tektin bundle where may function to recruit tektins or stabilize the bundle. The chain is Tektin bundle-interacting protein 1 (TEKTIP1) from Bos taurus (Bovine).